We begin with the raw amino-acid sequence, 316 residues long: Thymidylate synthase (316 aa).

DUMP contacts are provided by residues Arg-23 and 178–179 (RR). Cys-198 (nucleophile) is an active-site residue. Residues 218 to 221 (RSAD), Asn-229, and 259 to 261 (HIY) contribute to the dUMP site. (6R)-5,10-methylene-5,6,7,8-tetrahydrofolate is bound at residue Asp-221. Residue Ala-315 coordinates (6R)-5,10-methylene-5,6,7,8-tetrahydrofolate.

It belongs to the thymidylate synthase family. Bacterial-type ThyA subfamily. In terms of assembly, homodimer.

The protein localises to the cytoplasm. The enzyme catalyses dUMP + (6R)-5,10-methylene-5,6,7,8-tetrahydrofolate = 7,8-dihydrofolate + dTMP. It participates in pyrimidine metabolism; dTTP biosynthesis. Catalyzes the reductive methylation of 2'-deoxyuridine-5'-monophosphate (dUMP) to 2'-deoxythymidine-5'-monophosphate (dTMP) while utilizing 5,10-methylenetetrahydrofolate (mTHF) as the methyl donor and reductant in the reaction, yielding dihydrofolate (DHF) as a by-product. This enzymatic reaction provides an intracellular de novo source of dTMP, an essential precursor for DNA biosynthesis. This is Thymidylate synthase from Levilactobacillus brevis (strain ATCC 367 / BCRC 12310 / CIP 105137 / JCM 1170 / LMG 11437 / NCIMB 947 / NCTC 947) (Lactobacillus brevis).